The following is a 671-amino-acid chain: Talaropentaene synthase (671 aa).

A Mg(2+)-binding site is contributed by Asp-92. The short motif at 92 to 96 is the DDXXD 1 element; it reads DDMTD. Residues 223-231 carry the NSE/DTE motif; it reads NDLYSYEKE. The isopentenyl diphosphate site is built by Lys-389, Arg-392, and His-421. Asp-428 and Asp-432 together coordinate Mg(2+). Positions 428 to 432 match the DDXXD 2 motif; the sequence is DDIED. Arg-437 provides a ligand contact to dimethylallyl diphosphate. Arg-438 is a binding site for isopentenyl diphosphate. Lys-515, Thr-516, Gln-551, Asn-558, Lys-568, and Lys-578 together coordinate dimethylallyl diphosphate.

In the N-terminal section; belongs to the terpene synthase family. This sequence in the C-terminal section; belongs to the FPP/GGPP synthase family. Requires Mg(2+) as cofactor.

It carries out the reaction 5 isopentenyl diphosphate + dimethylallyl diphosphate = all-trans-hexaprenyl diphosphate + 5 diphosphate. It catalyses the reaction all-trans-hexaprenyl diphosphate = talaropentaene + diphosphate. Its function is as follows. Bifunctional terpene synthase that converts dimethylallyl diphosphate (DMAPP) and isopentenyl diphosphate (IPP) into talaropentaene as a single product. The C-terminal prenyltransferase (PT) domain of MpMS catalyzes formation of hexaprenyl diphosphate (HexPP), whereas the N-terminal terpene cyclase (TC) domain catalyzes the cyclization of HexPP to talaropentaene. This is Talaropentaene synthase from Talaromyces verruculosus (Penicillium verruculosum).